Consider the following 185-residue polypeptide: Threonylcarbamoyl-AMP synthase (185 aa).

Residues 4 to 185 (SWRVQQAARE…LATGEIVRPG (182 aa)) form the YrdC-like domain.

It belongs to the SUA5 family. TsaC subfamily.

It localises to the cytoplasm. The catalysed reaction is L-threonine + hydrogencarbonate + ATP = L-threonylcarbamoyladenylate + diphosphate + H2O. Its function is as follows. Required for the formation of a threonylcarbamoyl group on adenosine at position 37 (t(6)A37) in tRNAs that read codons beginning with adenine. Catalyzes the conversion of L-threonine, HCO(3)(-)/CO(2) and ATP to give threonylcarbamoyl-AMP (TC-AMP) as the acyladenylate intermediate, with the release of diphosphate. In Pseudomonas putida (strain W619), this protein is Threonylcarbamoyl-AMP synthase.